The sequence spans 385 residues: MTSIGIVSPQSMFFDTPLPLQSGAQITDYTLVYETYGTLNADHSNAVLVCHALNASHHVAGTYSEDAGTTGWWDNMVGPGKPLDTNKYFVIGVNNLGSCFGSTGPMHINPATGKQYGAHFPVVTVEDWVQSQARLADALGIKQFAAVMGGSLGGMQALAWSILFPERLRHCVVIASTPKLTAQNIAFDDVARQAILTDPDYHGGDFYAHGVVPKNGLRVARMLGHITYLSDDDMAAKFGRELRSGSYQFGFGIDFEIESYLRYQGDKFSTYFDANTYLLITKALDYFDPAKDFGGDLTKTLSNTRAKFLLVSFTTDWRFSPERSHEMVQALVNNNRTVTYAEIDAPHGHDAFLLDDQRYMNVVRSYFERAYEEIDGGSLKAGASA.

The AB hydrolase-1 domain maps to 45–355; the sequence is NAVLVCHALN…PHGHDAFLLD (311 aa). Catalysis depends on Ser151, which acts as the Nucleophile. Residue Arg221 participates in substrate binding. Catalysis depends on residues Asp316 and His349. Asp350 serves as a coordination point for substrate.

Belongs to the AB hydrolase superfamily. MetX family. Homodimer.

It localises to the cytoplasm. The catalysed reaction is L-homoserine + succinyl-CoA = O-succinyl-L-homoserine + CoA. It participates in amino-acid biosynthesis; L-methionine biosynthesis via de novo pathway; O-succinyl-L-homoserine from L-homoserine: step 1/1. In terms of biological role, transfers a succinyl group from succinyl-CoA to L-homoserine, forming succinyl-L-homoserine. The sequence is that of Homoserine O-succinyltransferase from Janthinobacterium sp. (strain Marseille) (Minibacterium massiliensis).